The primary structure comprises 388 residues: Oligogalacturonate lyase (388 aa).

The protein localises to the periplasm. The enzyme catalyses 4-(4-deoxy-alpha-D-galact-4-enuronosyl)-D-galacturonate = 2 5-dehydro-4-deoxy-D-glucuronate. It participates in glycan metabolism; pectin degradation; 2-dehydro-3-deoxy-D-gluconate from pectin: step 3/5. Involved in degradation of pectin, which causes soft-rod disease in plants. The chain is Oligogalacturonate lyase (ogl) from Dickeya dadantii (strain 3937) (Erwinia chrysanthemi (strain 3937)).